The sequence spans 115 residues: Large ribosomal subunit protein bL19 (115 aa).

Belongs to the bacterial ribosomal protein bL19 family.

Functionally, this protein is located at the 30S-50S ribosomal subunit interface and may play a role in the structure and function of the aminoacyl-tRNA binding site. The sequence is that of Large ribosomal subunit protein bL19 from Desulforamulus reducens (strain ATCC BAA-1160 / DSM 100696 / MI-1) (Desulfotomaculum reducens).